We begin with the raw amino-acid sequence, 392 residues long: Enoyl-[acyl-carrier-protein] reductase [NADH] (392 aa).

Residues 48–53 (GCSTGY), 74–75 (FE), 111–112 (DA), and 139–140 (LA) contribute to the NAD(+) site. Tyrosine 225 provides a ligand contact to substrate. Tyrosine 235 serves as the catalytic Proton donor. NAD(+)-binding positions include lysine 244 and 273–275 (LVT).

Belongs to the TER reductase family. As to quaternary structure, monomer.

It catalyses the reaction a 2,3-saturated acyl-[ACP] + NAD(+) = a (2E)-enoyl-[ACP] + NADH + H(+). The protein operates within lipid metabolism; fatty acid biosynthesis. Functionally, involved in the final reduction of the elongation cycle of fatty acid synthesis (FAS II). Catalyzes the reduction of a carbon-carbon double bond in an enoyl moiety that is covalently linked to an acyl carrier protein (ACP). The chain is Enoyl-[acyl-carrier-protein] reductase [NADH] from Idiomarina loihiensis (strain ATCC BAA-735 / DSM 15497 / L2-TR).